The chain runs to 483 residues: Cobyric acid synthase (483 aa).

The 188-residue stretch at 251-438 (ALIVAVPMLP…LHGVFSADRF (188 aa)) folds into the GATase cobBQ-type domain. The active-site Nucleophile is Cys333. The active site involves His430.

It belongs to the CobB/CobQ family. CobQ subfamily.

Its pathway is cofactor biosynthesis; adenosylcobalamin biosynthesis. In terms of biological role, catalyzes amidations at positions B, D, E, and G on adenosylcobyrinic A,C-diamide. NH(2) groups are provided by glutamine, and one molecule of ATP is hydrogenolyzed for each amidation. The sequence is that of Cobyric acid synthase from Brucella suis biovar 1 (strain 1330).